The primary structure comprises 227 residues: PKHD-type hydroxylase azo0608 (227 aa).

Positions 78–178 (RVLTPFFNRY…RVACFMFMQS (101 aa)) constitute a Fe2OG dioxygenase domain. Positions 97, 99, and 159 each coordinate Fe cation. Arg-169 contributes to the 2-oxoglutarate binding site.

Fe(2+) is required as a cofactor. The cofactor is L-ascorbate.

The protein is PKHD-type hydroxylase azo0608 of Azoarcus sp. (strain BH72).